The sequence spans 461 residues: Cysteine--tRNA ligase (461 aa).

Cysteine 28 serves as a coordination point for Zn(2+). A 'HIGH' region motif is present at residues 30-40 (ITVYDLCHIGH). The Zn(2+) site is built by cysteine 209, histidine 234, and glutamate 238. The 'KMSKS' region signature appears at 266–270 (KMSKS). Lysine 269 contacts ATP.

This sequence belongs to the class-I aminoacyl-tRNA synthetase family. As to quaternary structure, monomer. The cofactor is Zn(2+).

It localises to the cytoplasm. It catalyses the reaction tRNA(Cys) + L-cysteine + ATP = L-cysteinyl-tRNA(Cys) + AMP + diphosphate. This is Cysteine--tRNA ligase from Escherichia coli (strain 55989 / EAEC).